A 250-amino-acid polypeptide reads, in one-letter code: Peroxiredoxin (250 aa).

A Thioredoxin domain is found at 6–163 (PLIGERFPEM…ILRIVKALKL (158 aa)). Cysteine 50 serves as the catalytic Cysteine sulfenic acid (-SOH) intermediate. Residue arginine 126 participates in substrate binding. A disulfide bridge connects residues cysteine 207 and cysteine 213.

It belongs to the peroxiredoxin family. Prx6 subfamily. As to quaternary structure, homodecamer. Pentamer of dimers that assemble into a ring structure.

The protein localises to the cytoplasm. It catalyses the reaction a hydroperoxide + [thioredoxin]-dithiol = an alcohol + [thioredoxin]-disulfide + H2O. In terms of biological role, thiol-specific peroxidase that catalyzes the reduction of hydrogen peroxide and organic hydroperoxides to water and alcohols, respectively. Plays a role in cell protection against oxidative stress by detoxifying peroxides. The protein is Peroxiredoxin of Aeropyrum pernix (strain ATCC 700893 / DSM 11879 / JCM 9820 / NBRC 100138 / K1).